Here is a 908-residue protein sequence, read N- to C-terminus: Metabotropic glutamate receptor 8 (908 aa).

An N-terminal signal peptide occupies residues 1–33; it reads MVCEGKRSASCPCFFLLTAKFYWILTMMQRTHS. Residues 34–583 lie on the Extracellular side of the membrane; the sequence is QEYAHSIRVD…IIKLEWHSPW (550 aa). Residues Cys64 and Cys106 are joined by a disulfide bond. Asn95 carries an N-linked (GlcNAc...) asparagine glycan. L-glutamate-binding positions include Ser156, 177 to 179, and Tyr227; that span reads AST. 7 cysteine pairs are disulfide-bonded: Cys246–Cys534, Cys369–Cys384, Cys424–Cys431, Cys516–Cys535, Cys520–Cys538, Cys541–Cys553, and Cys556–Cys569. Asn298 carries N-linked (GlcNAc...) asparagine glycosylation. Residue Asp309 participates in L-glutamate binding. Residue Lys401 participates in L-glutamate binding. 2 N-linked (GlcNAc...) asparagine glycosylation sites follow: Asn452 and Asn480. Asn565 carries N-linked (GlcNAc...) asparagine glycosylation. A helical transmembrane segment spans residues 584–608; it reads AVVPVFVAILGIIATTFVIVTFVRY. Residues 609–620 lie on the Cytoplasmic side of the membrane; sequence NDTPIVRASGRE. Residues 621–641 form a helical membrane-spanning segment; it reads LSYVLLTGIFLCYSITFLMIA. Over 642 to 647 the chain is Extracellular; sequence APDTII. Residues 648–668 form a helical membrane-spanning segment; it reads CSFRRVFLGLGMCFSYAALLT. Residues 669-695 are Cytoplasmic-facing; sequence KTNRIHRIFEQGKKSVTAPKFISPASQ. The helical transmembrane segment at 696 to 716 threads the bilayer; it reads LVITFSLISVQLLGVFVWFVV. The Extracellular portion of the chain corresponds to 717–746; the sequence is DPPHIIIDYGEQRTLDPEKARGVLKCDISD. A helical membrane pass occupies residues 747–768; that stretch reads LSLICSLGYSILLMVTCTVYAI. The Cytoplasmic segment spans residues 769-781; that stretch reads KTRGVPETFNEAK. A helical transmembrane segment spans residues 782–803; that stretch reads PIGFTMYTTCIIWLAFIPIFFG. At 804–818 the chain is on the extracellular side; the sequence is TAQSAEKMYIQTTTL. The chain crosses the membrane as a helical span at residues 819-843; that stretch reads TVSMSLSASVSLGMLYMPKVYIIIF. The Cytoplasmic portion of the chain corresponds to 844–908; sequence HPEQNVQKRK…TYISYSNHSI (65 aa). Residue Lys882 forms a Glycyl lysine isopeptide (Lys-Gly) (interchain with G-Cter in SUMO1) linkage.

Belongs to the G-protein coupled receptor 3 family. Interacts with PICK1.

It is found in the cell membrane. Its function is as follows. G-protein coupled receptor for glutamate. Ligand binding causes a conformation change that triggers signaling via guanine nucleotide-binding proteins (G proteins) and modulates the activity of down-stream effectors, such as adenylate cyclase. Signaling inhibits adenylate cyclase activity. The sequence is that of Metabotropic glutamate receptor 8 (GRM8) from Homo sapiens (Human).